A 91-amino-acid polypeptide reads, in one-letter code: Small ribosomal subunit protein uS19 (91 aa).

It belongs to the universal ribosomal protein uS19 family.

In terms of biological role, protein S19 forms a complex with S13 that binds strongly to the 16S ribosomal RNA. In Chromohalobacter salexigens (strain ATCC BAA-138 / DSM 3043 / CIP 106854 / NCIMB 13768 / 1H11), this protein is Small ribosomal subunit protein uS19.